The chain runs to 153 residues: E3 ubiquitin-protein ligase AIRP1 (153 aa).

The RING-type; atypical zinc-finger motif lies at 104–145; sequence CPICLEEYEIDNPKLLTKCGHDFHLACILAWMERSEACPVCD.

It localises to the cytoplasm. The protein localises to the cytosol. The catalysed reaction is S-ubiquitinyl-[E2 ubiquitin-conjugating enzyme]-L-cysteine + [acceptor protein]-L-lysine = [E2 ubiquitin-conjugating enzyme]-L-cysteine + N(6)-ubiquitinyl-[acceptor protein]-L-lysine.. Its function is as follows. Possesses E3 ubiquitin-protein ligase activity in vitro when associated with the E2 enzyme UBC8 in vitro. Plays combinatory roles with AIRP2 in the positive regulation of the abscisic acid-mediated drought stress response. This is E3 ubiquitin-protein ligase AIRP1 from Arabidopsis thaliana (Mouse-ear cress).